Consider the following 483-residue polypeptide: Regulatory protein ViaA (483 aa).

This sequence belongs to the ViaA family. As to quaternary structure, homodimer. Interacts with RavA.

It is found in the cytoplasm. Functionally, component of the RavA-ViaA chaperone complex, which may act on the membrane to optimize the function of some of the respiratory chains. ViaA stimulates the ATPase activity of RavA. This chain is Regulatory protein ViaA, found in Escherichia coli O139:H28 (strain E24377A / ETEC).